Here is a 43-residue protein sequence, read N- to C-terminus: Protein PsbN (43 aa).

A helical membrane pass occupies residues leucine 7–phenylalanine 27.

The protein belongs to the PsbN family.

The protein resides in the cellular thylakoid membrane. May play a role in photosystem I and II biogenesis. This Synechococcus sp. (strain JA-2-3B'a(2-13)) (Cyanobacteria bacterium Yellowstone B-Prime) protein is Protein PsbN.